A 247-amino-acid chain; its full sequence is UPF0246 protein CD630_18230 (247 aa).

This sequence belongs to the UPF0246 family.

The polypeptide is UPF0246 protein CD630_18230 (Clostridioides difficile (strain 630) (Peptoclostridium difficile)).